The sequence spans 282 residues: ATP synthase subunit a (282 aa).

Transmembrane regions (helical) follow at residues 38 to 58, 97 to 117, 145 to 165, 187 to 207, 225 to 247, and 261 to 281; these read VDSM…LWLA, FVAP…AMDM, VVPT…LLLC, FGSH…EFVA, LIFI…GHIV, and TLQA…AHEG.

It belongs to the ATPase A chain family. As to quaternary structure, F-type ATPases have 2 components, CF(1) - the catalytic core - and CF(0) - the membrane proton channel. CF(1) has five subunits: alpha(3), beta(3), gamma(1), delta(1), epsilon(1). CF(0) has three main subunits: a(1), b(2) and c(9-12). The alpha and beta chains form an alternating ring which encloses part of the gamma chain. CF(1) is attached to CF(0) by a central stalk formed by the gamma and epsilon chains, while a peripheral stalk is formed by the delta and b chains.

The protein resides in the cell inner membrane. Key component of the proton channel; it plays a direct role in the translocation of protons across the membrane. The chain is ATP synthase subunit a from Azoarcus sp. (strain BH72).